The chain runs to 932 residues: Protein translocase subunit SecA (932 aa).

Residues Q86, 104 to 108 (GEGKT), and D494 contribute to the ATP site. Positions 857-932 (EDAGAEAHAS…KPAPKRKKRR (76 aa)) are disordered. Residues 905-915 (TAGSAGDSNLP) are compositionally biased toward polar residues. The segment covering 920-932 (KTNKPAPKRKKRR) has biased composition (basic residues).

This sequence belongs to the SecA family. Monomer and homodimer. Part of the essential Sec protein translocation apparatus which comprises SecA, SecYEG and auxiliary proteins SecDF. Other proteins may also be involved.

The protein resides in the cell membrane. Its subcellular location is the cytoplasm. It catalyses the reaction ATP + H2O + cellular proteinSide 1 = ADP + phosphate + cellular proteinSide 2.. Part of the Sec protein translocase complex. Interacts with the SecYEG preprotein conducting channel. Has a central role in coupling the hydrolysis of ATP to the transfer of proteins into and across the cell membrane, serving as an ATP-driven molecular motor driving the stepwise translocation of polypeptide chains across the membrane. This is Protein translocase subunit SecA from Renibacterium salmoninarum (strain ATCC 33209 / DSM 20767 / JCM 11484 / NBRC 15589 / NCIMB 2235).